Consider the following 140-residue polypeptide: RxLR effector protein CRE9 (140 aa).

Residues 1–24 (MRTSVFVALVVATFVATCISFTSA) form the signal peptide. Positions 43–61 (RTLAEADDWWLASTNTEER) match the RxLR-dEER motif. Residues 119 to 139 (LKILYGALLAGLIIVGVEAML) traverse the membrane as a helical segment.

This sequence belongs to the RxLR effector family.

The protein localises to the secreted. It is found in the host cell. Its subcellular location is the membrane. Its function is as follows. Effector that is involved in host plant infection. Contributes to virulence during the early infection stage, by inhibiting plant defense responses induced by both PAMP-triggered immunity (PTI) and effector-triggered immunity (ETI). This Phytophthora infestans (strain T30-4) (Potato late blight agent) protein is RxLR effector protein CRE9.